The sequence spans 424 residues: S-adenosylmethionine synthase (424 aa).

Residue H14 coordinates ATP. D16 is a Mg(2+) binding site. K(+) is bound at residue E42. L-methionine-binding residues include E55 and Q98. The segment at 98–108 (QSNDISRGIER) is flexible loop. Residues 165–167 (DAK), 242–243 (KF), D251, 257–258 (RK), A274, and K278 contribute to the ATP site. D251 is a binding site for L-methionine. Position 282 (K282) interacts with L-methionine.

This sequence belongs to the AdoMet synthase family. As to quaternary structure, homotetramer; dimer of dimers. Mg(2+) is required as a cofactor. K(+) serves as cofactor.

Its subcellular location is the cytoplasm. The enzyme catalyses L-methionine + ATP + H2O = S-adenosyl-L-methionine + phosphate + diphosphate. It functions in the pathway amino-acid biosynthesis; S-adenosyl-L-methionine biosynthesis; S-adenosyl-L-methionine from L-methionine: step 1/1. In terms of biological role, catalyzes the formation of S-adenosylmethionine (AdoMet) from methionine and ATP. The overall synthetic reaction is composed of two sequential steps, AdoMet formation and the subsequent tripolyphosphate hydrolysis which occurs prior to release of AdoMet from the enzyme. This Azobacteroides pseudotrichonymphae genomovar. CFP2 protein is S-adenosylmethionine synthase.